Here is a 428-residue protein sequence, read N- to C-terminus: Stromal membrane-associated protein 2 (428 aa).

In terms of domain architecture, Arf-GAP spans 13–139 (QAVLANLLLE…INVLRKEKDD (127 aa)). A C4-type zinc finger spans residues 28 to 51 (CADCQSKGPRWASWNIGVFICIRC). A phosphoserine mark is found at serine 127, serine 219, serine 224, serine 230, and serine 239. The interaction with clathrin heavy chains stretch occupies residues 163–231 (MPQKKEDAQL…SVSRKAVGSM (69 aa)). Residues 218–262 (PSPSSVSRKAVGSMPTAGSAGSVPENLNLFPEPGSKSEETGKKQL) are disordered. Residues 252 to 262 (SKSEETGKKQL) are compositionally biased toward basic and acidic residues. The segment at 339 to 428 (MGGMQASMMG…NQTLSPQMWK (90 aa)) is interaction with PICALM.

Interacts with ARF1. Interacts with PICALM and clathrin heavy chains.

It localises to the cytoplasm. In terms of biological role, GTPase activating protein that acts on ARF1. Can also activate ARF6 (in vitro). May play a role in clathrin-dependent retrograde transport from early endosomes to the trans-Golgi network. This Mus musculus (Mouse) protein is Stromal membrane-associated protein 2 (Smap2).